The chain runs to 127 residues: Large ribosomal subunit protein bL19 (127 aa).

Belongs to the bacterial ribosomal protein bL19 family.

Functionally, this protein is located at the 30S-50S ribosomal subunit interface and may play a role in the structure and function of the aminoacyl-tRNA binding site. The protein is Large ribosomal subunit protein bL19 of Paraburkholderia phymatum (strain DSM 17167 / CIP 108236 / LMG 21445 / STM815) (Burkholderia phymatum).